A 299-amino-acid chain; its full sequence is ATP phosphoribosyltransferase (299 aa).

Belongs to the ATP phosphoribosyltransferase family. Long subfamily. The cofactor is Mg(2+).

The protein localises to the cytoplasm. It catalyses the reaction 1-(5-phospho-beta-D-ribosyl)-ATP + diphosphate = 5-phospho-alpha-D-ribose 1-diphosphate + ATP. The protein operates within amino-acid biosynthesis; L-histidine biosynthesis; L-histidine from 5-phospho-alpha-D-ribose 1-diphosphate: step 1/9. With respect to regulation, feedback inhibited by histidine. Functionally, catalyzes the condensation of ATP and 5-phosphoribose 1-diphosphate to form N'-(5'-phosphoribosyl)-ATP (PR-ATP). Has a crucial role in the pathway because the rate of histidine biosynthesis seems to be controlled primarily by regulation of HisG enzymatic activity. The protein is ATP phosphoribosyltransferase of Shewanella pealeana (strain ATCC 700345 / ANG-SQ1).